The following is a 126-amino-acid chain: Holo-[acyl-carrier-protein] synthase (126 aa).

Mg(2+) is bound by residues D9 and E58.

This sequence belongs to the P-Pant transferase superfamily. AcpS family. Mg(2+) is required as a cofactor.

It is found in the cytoplasm. It catalyses the reaction apo-[ACP] + CoA = holo-[ACP] + adenosine 3',5'-bisphosphate + H(+). In terms of biological role, transfers the 4'-phosphopantetheine moiety from coenzyme A to a Ser of acyl-carrier-protein. The polypeptide is Holo-[acyl-carrier-protein] synthase (Enterobacter sp. (strain 638)).